A 444-amino-acid chain; its full sequence is sn-glycerol-3-phosphate-binding periplasmic protein UgpB (444 aa).

The first 30 residues, 1-30, serve as a signal peptide directing secretion; it reads MFNNTIRKTHAIRTAAACVAFALMSAGAQA. Sn-glycerol 3-phosphate-binding residues include Tyr72, Glu96, Ser151, Ser277, Gly314, Tyr353, and Arg404.

The protein belongs to the bacterial solute-binding protein 1 family. As to quaternary structure, the complex is composed of two ATP-binding proteins (UgpC), two transmembrane proteins (UgpA and UgpE) and a solute-binding protein (UgpB).

Its subcellular location is the periplasm. Part of the ABC transporter complex UgpBAEC involved in sn-glycerol-3-phosphate (G3P) import. Binds G3P. The sequence is that of sn-glycerol-3-phosphate-binding periplasmic protein UgpB (ugpB) from Pectobacterium atrosepticum (strain SCRI 1043 / ATCC BAA-672) (Erwinia carotovora subsp. atroseptica).